A 103-amino-acid polypeptide reads, in one-letter code: UPF0145 protein BC_5181 (103 aa).

This sequence belongs to the UPF0145 family.

This is UPF0145 protein BC_5181 from Bacillus cereus (strain ATCC 14579 / DSM 31 / CCUG 7414 / JCM 2152 / NBRC 15305 / NCIMB 9373 / NCTC 2599 / NRRL B-3711).